We begin with the raw amino-acid sequence, 191 residues long: Thymidine kinase (191 aa).

Residues 9–16 (GSMNSGKT) and 85–88 (DESQ) contribute to the ATP site. E86 functions as the Proton acceptor in the catalytic mechanism. C143, C146, C181, and C184 together coordinate Zn(2+).

Belongs to the thymidine kinase family. As to quaternary structure, homotetramer.

It is found in the cytoplasm. It carries out the reaction thymidine + ATP = dTMP + ADP + H(+). This is Thymidine kinase from Listeria innocua serovar 6a (strain ATCC BAA-680 / CLIP 11262).